Consider the following 637-residue polypeptide: Neuroendocrine convertase 2 (637 aa).

A signal peptide spans Met-1–Ala-24. Residues Glu-25 to Arg-108 constitute a propeptide that is removed on maturation. The Peptidase S8 domain occupies Gln-128–Val-452. Residues Asp-166 and His-207 each act as charge relay system in the active site. Cystine bridges form between Cys-224–Cys-375 and Cys-316–Cys-346. A glycan (N-linked (GlcNAc...) asparagine) is linked at Asn-374. Catalysis depends on Ser-383, which acts as the Charge relay system. The region spanning Thr-460–Ala-596 is the P/Homo B domain. An intrachain disulfide couples Cys-467 to Cys-493. N-linked (GlcNAc...) asparagine glycosylation is found at Asn-513 and Asn-523.

Belongs to the peptidase S8 family. Furin subfamily.

The protein localises to the cytoplasmic vesicle. Its subcellular location is the secretory vesicle. The protein resides in the secreted. The catalysed reaction is Release of protein hormones and neuropeptides from their precursors, generally by hydrolysis of -Lys-Arg-|- bonds.. Serine endopeptidase which is involved in the processing of hormone and other protein precursors at sites comprised of pairs of basic amino acid residues. Responsible for the release of glucagon from proglucagon in pancreatic A cells. The chain is Neuroendocrine convertase 2 (Pcsk2) from Rattus norvegicus (Rat).